We begin with the raw amino-acid sequence, 164 residues long: Nucleotide-binding protein Acid345_2028 (164 aa).

The protein belongs to the YajQ family.

Functionally, nucleotide-binding protein. This is Nucleotide-binding protein Acid345_2028 from Koribacter versatilis (strain Ellin345).